The primary structure comprises 436 residues: Adenosylhomocysteinase (436 aa).

The substrate site is built by threonine 62, aspartate 136, and glutamate 161. 162-164 (TTT) is an NAD(+) binding site. 2 residues coordinate substrate: lysine 191 and aspartate 195. NAD(+) contacts are provided by residues asparagine 196, 225-230 (GFGDVG), glutamate 248, asparagine 283, 304-306 (IGH), and asparagine 352.

This sequence belongs to the adenosylhomocysteinase family. NAD(+) is required as a cofactor.

Its subcellular location is the cytoplasm. The catalysed reaction is S-adenosyl-L-homocysteine + H2O = L-homocysteine + adenosine. It functions in the pathway amino-acid biosynthesis; L-homocysteine biosynthesis; L-homocysteine from S-adenosyl-L-homocysteine: step 1/1. May play a key role in the regulation of the intracellular concentration of adenosylhomocysteine. The chain is Adenosylhomocysteinase from Leptospira borgpetersenii serovar Hardjo-bovis (strain JB197).